The primary structure comprises 293 residues: Probable endonuclease 4 (293 aa).

The Zn(2+) site is built by His-75, His-115, Glu-153, Asp-187, His-190, His-224, Asp-237, His-239, and Glu-269.

This sequence belongs to the AP endonuclease 2 family. Zn(2+) serves as cofactor.

The catalysed reaction is Endonucleolytic cleavage to 5'-phosphooligonucleotide end-products.. Endonuclease IV plays a role in DNA repair. It cleaves phosphodiester bonds at apurinic or apyrimidinic (AP) sites, generating a 3'-hydroxyl group and a 5'-terminal sugar phosphate. In Chlamydia pneumoniae (Chlamydophila pneumoniae), this protein is Probable endonuclease 4.